The following is a 511-amino-acid chain: Fusicocca-1,10(14)-diene-8beta,16-diol C-9 hydroxylase (511 aa).

The helical transmembrane segment at 7-29 (TVAALAAVFVAGTLLSRLASWIR) threads the bilayer. N-linked (GlcNAc...) asparagine glycans are attached at residues Asn-64, Asn-163, and Asn-343. Cys-450 contributes to the heme binding site.

The protein belongs to the cytochrome P450 family. The cofactor is heme.

The protein resides in the membrane. It participates in mycotoxin biosynthesis. In terms of biological role, cytochrome P450 monooxygenase; part of the 2 gene clusters that mediate the biosynthesis of fusicoccins, diterpene glucosides that display phytohormone-like activity and function as potent activators of plasma membrane H(+)-ATPases in plants by modifying 14-3-3 proteins and cause the plant disease constriction canker. The first step in the pathway is performed by the fusicoccadiene synthase PaFS that possesses both prenyl transferase and terpene cyclase activity, converting isopentenyl diphosphate and dimethylallyl diphosphate into geranylgeranyl diphosphate (GGDP) and successively converting GGDP into fusicocca-2,10(14)-diene, a precursor for fusicoccin H. The second step is the oxidation at the C-8 position by the cytochrome P450 monooxygenase PaP450-2 to yield fusicocca-2,10(14)-diene-8-beta-ol. The cytochrome P450 monooxygenase PaP450-1 then catalyzes the hydroxylation at the C-16 position to produce fusicocca-2,10(14)-diene-8-beta,16-diol. The dioxygenase fc-dox then catalyzes the 16-oxydation of fusicocca-2,10(14)-diene-8-beta,16-diol to yield an aldehyde (8-beta-hydroxyfusicocca-1,10(14)-dien-16-al). The short-chain dehydrogenase/reductase fc-sdr catalyzes the reduction of the aldehyde to yield fusicocca-1,10(14)-diene-8-beta,16-diol. The next step is the hydroxylation at C-9 performed by the cytochrome P450 monooxygenase PaP450-3 that leads to fusicoccin H aglycon which is glycosylated to fusicoccin H by the O-glycosyltransferase PaGT. Hydroxylation at C-12 by the cytochrome P450 monooxygenase PaP450-4 leads then to the production of fusicoccin Q and is followed by methylation by the O-methyltransferase PaMT to yield fusicoccin P. Fusicoccin P is further converted to fusicoccin J via prenylation by the O-glucose prenyltransferase PaPT. Cytochrome P450 monooxygenase PaP450-5 then performs hydroxylation at C-19 to yield dideacetyl-fusicoccin A which is acetylated to 3'-O-deacetyl-fusicoccin A by the O-acetyltransferase PaAT-2. Finally, a another acetylation by the O-acetyltransferase PaAT-1 yields fusicoccin A. The sequence is that of Fusicocca-1,10(14)-diene-8beta,16-diol C-9 hydroxylase from Phomopsis amygdali (Fusicoccum amygdali).